The following is a 218-amino-acid chain: Ribose-5-phosphate isomerase A (218 aa).

Residues 28–31, 81–84, and 94–97 each bind substrate; these read TGST, DGAD, and KGGG. Glu-103 acts as the Proton acceptor in catalysis. Lys-121 contributes to the substrate binding site.

The protein belongs to the ribose 5-phosphate isomerase family. Homodimer.

The enzyme catalyses aldehydo-D-ribose 5-phosphate = D-ribulose 5-phosphate. Its pathway is carbohydrate degradation; pentose phosphate pathway; D-ribose 5-phosphate from D-ribulose 5-phosphate (non-oxidative stage): step 1/1. In terms of biological role, catalyzes the reversible conversion of ribose-5-phosphate to ribulose 5-phosphate. The chain is Ribose-5-phosphate isomerase A from Methylococcus capsulatus (strain ATCC 33009 / NCIMB 11132 / Bath).